A 178-amino-acid chain; its full sequence is Protein GrpE (178 aa).

It belongs to the GrpE family. Homodimer.

The protein localises to the cytoplasm. In terms of biological role, participates actively in the response to hyperosmotic and heat shock by preventing the aggregation of stress-denatured proteins, in association with DnaK and GrpE. It is the nucleotide exchange factor for DnaK and may function as a thermosensor. Unfolded proteins bind initially to DnaJ; upon interaction with the DnaJ-bound protein, DnaK hydrolyzes its bound ATP, resulting in the formation of a stable complex. GrpE releases ADP from DnaK; ATP binding to DnaK triggers the release of the substrate protein, thus completing the reaction cycle. Several rounds of ATP-dependent interactions between DnaJ, DnaK and GrpE are required for fully efficient folding. The protein is Protein GrpE of Rickettsia typhi (strain ATCC VR-144 / Wilmington).